Consider the following 100-residue polypeptide: Small ribosomal subunit protein uS14 (100 aa).

The protein belongs to the universal ribosomal protein uS14 family. Part of the 30S ribosomal subunit. Contacts proteins S3 and S10.

Its function is as follows. Binds 16S rRNA, required for the assembly of 30S particles and may also be responsible for determining the conformation of the 16S rRNA at the A site. The chain is Small ribosomal subunit protein uS14 from Microcystis aeruginosa (strain NIES-843 / IAM M-2473).